Consider the following 579-residue polypeptide: 2-succinyl-5-enolpyruvyl-6-hydroxy-3-cyclohexene-1-carboxylate synthase (579 aa).

The protein belongs to the TPP enzyme family. MenD subfamily. As to quaternary structure, homodimer. Requires Mg(2+) as cofactor. Mn(2+) is required as a cofactor. It depends on thiamine diphosphate as a cofactor.

It carries out the reaction isochorismate + 2-oxoglutarate + H(+) = 5-enolpyruvoyl-6-hydroxy-2-succinyl-cyclohex-3-ene-1-carboxylate + CO2. Its pathway is quinol/quinone metabolism; 1,4-dihydroxy-2-naphthoate biosynthesis; 1,4-dihydroxy-2-naphthoate from chorismate: step 2/7. It participates in quinol/quinone metabolism; menaquinone biosynthesis. Its function is as follows. Catalyzes the thiamine diphosphate-dependent decarboxylation of 2-oxoglutarate and the subsequent addition of the resulting succinic semialdehyde-thiamine pyrophosphate anion to isochorismate to yield 2-succinyl-5-enolpyruvyl-6-hydroxy-3-cyclohexene-1-carboxylate (SEPHCHC). The protein is 2-succinyl-5-enolpyruvyl-6-hydroxy-3-cyclohexene-1-carboxylate synthase of Oceanobacillus iheyensis (strain DSM 14371 / CIP 107618 / JCM 11309 / KCTC 3954 / HTE831).